The chain runs to 902 residues: Glycogen phosphorylase (902 aa).

The tract at residues 1–21 (MPPASTSTTNDMITEEPTSPH) is disordered. Position 31 is a phosphothreonine (Thr31). Position 333 is a phosphoserine (Ser333). At Lys751 the chain carries N6-(pyridoxal phosphate)lysine.

It belongs to the glycogen phosphorylase family. In terms of assembly, homodimer. The cofactor is pyridoxal 5'-phosphate.

The protein resides in the cytoplasm. Its subcellular location is the cytosol. It catalyses the reaction [(1-&gt;4)-alpha-D-glucosyl](n) + phosphate = [(1-&gt;4)-alpha-D-glucosyl](n-1) + alpha-D-glucose 1-phosphate. Its activity is regulated as follows. Activated by phosphorylation of Thr-31. Phosphorylase is an important allosteric enzyme in carbohydrate metabolism. Enzymes from different sources differ in their regulatory mechanisms and in their natural substrates. However, all known phosphorylases share catalytic and structural properties. This chain is Glycogen phosphorylase (GPH1), found in Saccharomyces cerevisiae (strain ATCC 204508 / S288c) (Baker's yeast).